The sequence spans 293 residues: Urease accessory protein UreD (293 aa).

The disordered stretch occupies residues 1-22; it reads MAVAQQAWSPGADPAPSAAPVS. Residues 7–22 are compositionally biased toward low complexity; it reads AWSPGADPAPSAAPVS.

This sequence belongs to the UreD family. As to quaternary structure, ureD, UreF and UreG form a complex that acts as a GTP-hydrolysis-dependent molecular chaperone, activating the urease apoprotein by helping to assemble the nickel containing metallocenter of UreC. The UreE protein probably delivers the nickel.

It is found in the cytoplasm. Functionally, required for maturation of urease via the functional incorporation of the urease nickel metallocenter. This is Urease accessory protein UreD from Alkalilimnicola ehrlichii (strain ATCC BAA-1101 / DSM 17681 / MLHE-1).